We begin with the raw amino-acid sequence, 358 residues long: Chondroadherin (358 aa).

An N-terminal signal peptide occupies residues 1-20 (MARALLFSLVFLAILLPALA). Residues 21-50 (ACPQNCHCHGDLQHVICDKVGLQKIPKVSE) form the LRRNT domain. An intrachain disulfide couples C22 to C37. LRR repeat units follow at residues 51 to 72 (TTKL…SFRT), 75 to 96 (NLVS…AFRG), 99 to 120 (QLIY…AFDD), 123 to 144 (ELTY…LLSP), 147 to 168 (NLFI…AFQG), 171 to 192 (DLRW…SLDD), 195 to 216 (NLAK…ALSK), 219 to 240 (VVEE…AFQS), 244 to 265 (YLET…AFSG), and 268 to 289 (TLKH…FPFD). S143 carries O-linked (GalNAc...) serine glycosylation. The LRRCT domain occupies 299–347 (NPWKCTCQLRGLRRWLEAKASRPDATCSSPAKFKGQRIRDTDALRSCKS). 2 disulfide bridges follow: C303-C345 and C305-C325. The tract at residues 322-358 (DATCSSPAKFKGQRIRDTDALRSCKSPTKRSKKAGRH) is disordered. A compositionally biased stretch (basic residues) spans 348-358 (PTKRSKKAGRH).

Belongs to the small leucine-rich proteoglycan (SLRP) family. SLRP class IV subfamily. Mostly monomeric. Interacts with collagen type II. In terms of tissue distribution, cartilage.

It localises to the secreted. It is found in the extracellular space. The protein localises to the extracellular matrix. Functionally, promotes attachment of chondrocytes, fibroblasts, and osteoblasts. This binding is mediated (at least for chondrocytes and fibroblasts) by the integrin alpha(2)beta(1). May play an important role in the regulation of chondrocyte growth and proliferation. The chain is Chondroadherin (Chad) from Mus musculus (Mouse).